Reading from the N-terminus, the 447-residue chain is Dual specificity protein phosphatase CDC14C (447 aa).

Residues 14–168 (PQDDVYVDIT…AMQYGFLNFN (155 aa)) are a. The linker stretch occupies residues 169-182 (SFNLDEYEHYEKAE). The segment at 183–349 (NGDLNWIIPD…EGDYFRQRLK (167 aa)) is b. A Tyrosine-protein phosphatase domain is found at 184 to 344 (GDLNWIIPDR…TSLWLEGDYF (161 aa)). Cys284 (phosphocysteine intermediate) is an active-site residue. The helical transmembrane segment at 426-446 (FTLCSVVIWWIVCDYILPILL) threads the bilayer.

Belongs to the protein-tyrosine phosphatase family. Non-receptor class CDC14 subfamily.

It is found in the endoplasmic reticulum membrane. The enzyme catalyses O-phospho-L-tyrosyl-[protein] + H2O = L-tyrosyl-[protein] + phosphate. It catalyses the reaction O-phospho-L-seryl-[protein] + H2O = L-seryl-[protein] + phosphate. The catalysed reaction is O-phospho-L-threonyl-[protein] + H2O = L-threonyl-[protein] + phosphate. In terms of biological role, dual-specificity phosphatase. Preferentially dephosphorylates proteins modified by proline-directed kinases. The polypeptide is Dual specificity protein phosphatase CDC14C (Homo sapiens (Human)).